The primary structure comprises 520 residues: Cysteine--tRNA ligase (520 aa).

Residue C29 coordinates Zn(2+). The short motif at 31–41 (PTVYNYPHLGN) is the 'HIGH' region element. Residues C227, H252, and E256 each contribute to the Zn(2+) site. A 'KMSKS' region motif is present at residues 301–305 (KMSKS). K304 contributes to the ATP binding site.

It belongs to the class-I aminoacyl-tRNA synthetase family. As to quaternary structure, monomer. It depends on Zn(2+) as a cofactor.

The protein localises to the cytoplasm. It catalyses the reaction tRNA(Cys) + L-cysteine + ATP = L-cysteinyl-tRNA(Cys) + AMP + diphosphate. This chain is Cysteine--tRNA ligase (cysS), found in Treponema pallidum (strain Nichols).